The following is a 383-amino-acid chain: MSLVTDLPAIFDQFSEARQTGFLTVMDLKERGIPLVGTYCTFMPQEIPMAAGAVVVSLCSTSDETIEEAEKDLPRNLCPLIKSSYGFGKTDKCPYFYFSDLVVGETTCDGKKKMYEYMAEFKPVHVMQLPNSVKDDASRALWKAEMLRLQKTVEERFGHEISEDALRDAIALKNRERRALANFYHLGQLNPPALSGSDILKVVYGATFRFDKEALINELDAMTARVRQQWEEGQRLDPRPRILITGCPIGGAAEKVVRAIEENGGWVVGYENCTGAKATEQCVAETGDVYDALADKYLAIGCSCVSPNDQRLKMLSQMVEEYQVDGVVDVILQACHTYAVESLAIKRHVRQQHNIPYIAIETDYSTSDVGQLSTRVAAFIEML.

Belongs to the FldB/FldC dehydratase alpha/beta subunit family.

In Escherichia coli (strain K12), this protein is Putative dehydratase subunit YjiM (yjiM).